The following is a 426-amino-acid chain: Serine hydroxymethyltransferase (426 aa).

(6S)-5,6,7,8-tetrahydrofolate contacts are provided by residues leucine 115 and 119–121 (GHI). Lysine 225 carries the post-translational modification N6-(pyridoxal phosphate)lysine.

It belongs to the SHMT family. In terms of assembly, homodimer. It depends on pyridoxal 5'-phosphate as a cofactor.

It localises to the cytoplasm. The protein operates within amino-acid biosynthesis; glycine biosynthesis; glycine from L-serine: step 1/1. Catalyzes the reversible interconversion of serine and glycine with a modified folate serving as the one-carbon carrier. Also exhibits a pteridine-independent aldolase activity toward beta-hydroxyamino acids, producing glycine and aldehydes, via a retro-aldol mechanism. The chain is Serine hydroxymethyltransferase from Thermoplasma volcanium (strain ATCC 51530 / DSM 4299 / JCM 9571 / NBRC 15438 / GSS1).